Consider the following 376-residue polypeptide: D-alanine--D-alanine ligase (376 aa).

An ATP-grasp domain is found at 153–366 (KLLLAGQGLP…YPELVHRLIQ (214 aa)). ATP is bound at residue 185–240 (VEALGYPVFVKPARAGSSIGITRVTSREGLAAAVAEAVSHDPKVVVEAALVGREIE). Positions 317, 333, and 335 each coordinate Mg(2+).

It belongs to the D-alanine--D-alanine ligase family. Mg(2+) serves as cofactor. Mn(2+) is required as a cofactor.

The protein localises to the cytoplasm. It carries out the reaction 2 D-alanine + ATP = D-alanyl-D-alanine + ADP + phosphate + H(+). It participates in cell wall biogenesis; peptidoglycan biosynthesis. Its function is as follows. Cell wall formation. The sequence is that of D-alanine--D-alanine ligase from Kineococcus radiotolerans (strain ATCC BAA-149 / DSM 14245 / SRS30216).